Reading from the N-terminus, the 325-residue chain is Peroxidase RIP1 (325 aa).

An N-terminal signal peptide occupies residues Met1–Ser21. Cystine bridges form between Cys38/Cys118, Cys71/Cys76, Cys125/Cys321, and Cys206/Cys231. His69 (proton acceptor) is an active-site residue. Ca(2+) contacts are provided by Asp70, Val73, Gly75, Asp77, and Ser79. An N-linked (GlcNAc...) asparagine glycan is attached at Asn87. Residue Pro169 coordinates substrate. N-linked (GlcNAc...) asparagine glycosylation is present at Asn174. His199 is a binding site for heme b. Thr200 lines the Ca(2+) pocket. A glycan (N-linked (GlcNAc...) asparagine) is linked at Asn215. The Ca(2+) site is built by Asp244, Thr246, and Glu251.

This sequence belongs to the peroxidase family. Classical plant (class III) peroxidase subfamily. Requires heme b as cofactor. Ca(2+) serves as cofactor. Expressed in the differentiating root epidermis following inoculation with the bacterial symbiont Sinorhizobium meliloti.

The protein resides in the secreted. It catalyses the reaction 2 a phenolic donor + H2O2 = 2 a phenolic radical donor + 2 H2O. Removal of H(2)O(2), oxidation of toxic reductants, biosynthesis and degradation of lignin, suberization, auxin catabolism, response to environmental stresses such as wounding, pathogen attack and oxidative stress. These functions might be dependent on each isozyme/isoform in each plant tissue. This is Peroxidase RIP1 from Medicago truncatula (Barrel medic).